The sequence spans 162 residues: Small ribosomal subunit protein uS12m (162 aa).

Residues 1 to 37 constitute a mitochondrion transit peptide; the sequence is MIRFAQYARYPVISRLMKPTVISPFQAQAFSSSSVML.

It belongs to the universal ribosomal protein uS12 family. Component of the mitochondrial small ribosomal subunit (mt-SSU). Mature yeast 74S mitochondrial ribosomes consist of a small (37S) and a large (54S) subunit. The 37S small subunit contains a 15S ribosomal RNA (15S mt-rRNA) and at least 32 different proteins. The 54S large subunit contains a 21S rRNA (21S mt-rRNA) and at least 45 different proteins. uS12m forms part of the decoding center of the mt-SSU.

It is found in the mitochondrion. Component of the mitochondrial ribosome (mitoribosome), a dedicated translation machinery responsible for the synthesis of mitochondrial genome-encoded proteins, including at least some of the essential transmembrane subunits of the mitochondrial respiratory chain. The mitoribosomes are attached to the mitochondrial inner membrane and translation products are cotranslationally integrated into the membrane. uS12m is required for respiratory growth. The sequence is that of Small ribosomal subunit protein uS12m from Schizosaccharomyces pombe (strain 972 / ATCC 24843) (Fission yeast).